Consider the following 326-residue polypeptide: GMP reductase (326 aa).

Cysteine 175 (thioimidate intermediate) is an active-site residue. 204–227 provides a ligand contact to NADP(+); the sequence is IIADGGIRTHGDIAKSVRFGATMV.

It belongs to the IMPDH/GMPR family. GuaC type 2 subfamily.

The catalysed reaction is IMP + NH4(+) + NADP(+) = GMP + NADPH + 2 H(+). Catalyzes the irreversible NADPH-dependent deamination of GMP to IMP. It functions in the conversion of nucleobase, nucleoside and nucleotide derivatives of G to A nucleotides, and in maintaining the intracellular balance of A and G nucleotides. The sequence is that of GMP reductase from Bacillus licheniformis (strain ATCC 14580 / DSM 13 / JCM 2505 / CCUG 7422 / NBRC 12200 / NCIMB 9375 / NCTC 10341 / NRRL NRS-1264 / Gibson 46).